The sequence spans 313 residues: Cilia- and flagella-associated protein 36 (313 aa).

Phosphoserine is present on residues Ser85 and Ser147. Residues 147–187 (SDLEQEEMKILKEVLRKSKEEYDQEEERKRKKQLSEAKTEE) adopt a coiled-coil conformation. Disordered stretches follow at residues 165–204 (KEEY…SQGD) and 262–292 (KIKQ…TAEE). Residues 179–189 (QLSEAKTEEHP) are compositionally biased toward basic and acidic residues. The segment covering 192–203 (ANETAKMSNSQG) has biased composition (polar residues). Ser201 is subject to Phosphoserine. Over residues 271–292 (QKGKPAGEVEEMTEKPEMTAEE) the composition is skewed to basic and acidic residues.

The protein belongs to the CFAP36 family. In terms of assembly, interacts with ARL3.

Its subcellular location is the nucleus. The protein localises to the cytoplasm. The protein resides in the cell projection. It localises to the cilium. It is found in the flagellum. In terms of biological role, may act as an effector for ARL3. This Bos taurus (Bovine) protein is Cilia- and flagella-associated protein 36.